Here is a 274-residue protein sequence, read N- to C-terminus: Lectizyme (274 aa).

A signal peptide spans 1 to 16 (MKFFAVFALCVASVSA). Residues 32 to 268 (IINGHEAEKG…FDKWIEDSIE (237 aa)) form the Peptidase S1 domain. Cysteine 57 and cysteine 73 are disulfide-bonded. Active-site charge relay system residues include histidine 72 and aspartate 119. 2 cysteine pairs are disulfide-bonded: cysteine 188-cysteine 204 and cysteine 215-cysteine 244. The active-site Charge relay system is the serine 219.

It belongs to the peptidase S1 family. In terms of tissue distribution, expressed in the midgut.

It is found in the secreted. Protein with lectin and protease activity involved in the establishment of trypanosome infections in tsetse flies. Binds D-glucosamine and agglutinates bloodstream-form trypanosomes and rabbit red blood cells. Capable of inducing transformation of bloodstream-form trypanosomes into procyclic (midgut) forms in vitro. The chain is Lectizyme (Gpl) from Glossina austeni (Savannah tsetse fly).